We begin with the raw amino-acid sequence, 112 residues long: UPF0342 protein SPT_0901 (112 aa).

This sequence belongs to the UPF0342 family.

This chain is UPF0342 protein SPT_0901, found in Streptococcus pneumoniae (strain Taiwan19F-14).